Reading from the N-terminus, the 302-residue chain is MVEPVQEYRLVLVTGPSGAGRTTAINALEDMGYEVIDNLPLSFVPRLIEGPSIGRPIALGLDVRNRDFNATALIELIDRLTQDPRVALEVLYVDCSASELIRRYNQTRRRHPLAPAETPAEGVEREIDLLAPVRVRADHLIDTSEMSPHDLKAELSRWFDRGAATRLAVSVQSFSYKRGVPRGVDMIFDCRFLKNPYWVESLRALDGREASVADYISSDPRFAPFFEKLRDLVLFLLPAQLEEGKAHLSLGFGCTGGQHRSVAVAELLGNALAEAGWPVSKRHRELERRAAAVLPTHQGEKA.

15–22 (GPSGAGRT) provides a ligand contact to ATP. 62-65 (DVRN) provides a ligand contact to GTP.

Belongs to the RapZ-like family.

Displays ATPase and GTPase activities. The protein is Nucleotide-binding protein RHOS4_02640 of Cereibacter sphaeroides (strain ATCC 17023 / DSM 158 / JCM 6121 / CCUG 31486 / LMG 2827 / NBRC 12203 / NCIMB 8253 / ATH 2.4.1.) (Rhodobacter sphaeroides).